The sequence spans 133 residues: Sigma factor-binding protein Crl (133 aa).

The essential for activity stretch occupies residues Thr-99–Ser-122.

This sequence belongs to the Crl family.

It is found in the cytoplasm. Its function is as follows. Binds to the sigma-S subunit of RNA polymerase, activating expression of sigma-S-regulated genes. Stimulates RNA polymerase holoenzyme formation and may bind to several other sigma factors, such as sigma-70 and sigma-32. The chain is Sigma factor-binding protein Crl from Photobacterium profundum (strain SS9).